We begin with the raw amino-acid sequence, 221 residues long: Interleukin-12 subunit alpha (221 aa).

An N-terminal signal peptide occupies residues 1–25 (MCPLRSLLLISTLVLLHHLPHLSLG). Disulfide bonds link cysteine 39-cysteine 112, cysteine 66-cysteine 198, and cysteine 87-cysteine 125. A glycan (N-linked (GlcNAc...) asparagine) is linked at asparagine 95.

The protein belongs to the IL-6 superfamily. In terms of assembly, heterodimer with IL12B; disulfide-linked. This heterodimer is known as interleukin IL-12. Heterodimer with EBI3/IL27B; not disulfide-linked. This heterodimer is known as interleukin IL-35. Interacts with NBR1; this interaction promotes IL-12 secretion.

It localises to the secreted. Heterodimerizes with IL12B to form the IL-12 cytokine or with EBI3/IL27B to form the IL-35 cytokine. IL-12 is primarily produced by professional antigen-presenting cells (APCs) such as B-cells and dendritic cells (DCs) as well as macrophages and granulocytes and regulates T-cell and natural killer-cell responses, induces the production of interferon-gamma (IFN-gamma), favors the differentiation of T-helper 1 (Th1) cells and is an important link between innate resistance and adaptive immunity. Mechanistically, exerts its biological effects through a receptor composed of IL12R1 and IL12R2 subunits. Binding to the receptor results in the rapid tyrosine phosphorylation of a number of cellular substrates including the JAK family kinases TYK2 and JAK2. In turn, recruited STAT4 gets phosphorylated and translocates to the nucleus where it regulates cytokine/growth factor responsive genes. As part of IL-35, plays essential roles in maintaining the immune homeostasis of the liver microenvironment and also functions as an immune-suppressive cytokine. Mediates biological events through unconventional receptors composed of IL12RB2 and gp130/IL6ST heterodimers or homodimers. Signaling requires the transcription factors STAT1 and STAT4, which form a unique heterodimer that binds to distinct DNA sites. This Capra hircus (Goat) protein is Interleukin-12 subunit alpha (IL12A).